A 652-amino-acid chain; its full sequence is Acetolactate synthase 3, chloroplastic (652 aa).

Positions 1–20 (MAAATSSSPISLTAKPSSKS) are enriched in polar residues. The segment at 1–23 (MAAATSSSPISLTAKPSSKSPLP) is disordered. A chloroplast-targeting transit peptide spans 1 to 69 (MAAATSSSPI…PEKTDKIKTF (69 aa)). Thiamine diphosphate is bound at residue glutamate 126. Residues arginine 228, 334-355 (HGTVYANYAVEHSDLLLAFGVR), and 377-396 (DIDSAEIGKNKTPHVSVCGD) each bind FAD. Residues 469 to 549 (QHQMWAAQFY…VKILLLNNQH (81 aa)) form a thiamine pyrophosphate binding region. 2 residues coordinate Mg(2+): aspartate 520 and asparagine 547.

This sequence belongs to the TPP enzyme family. Requires Mg(2+) as cofactor. Thiamine diphosphate is required as a cofactor.

It is found in the plastid. Its subcellular location is the chloroplast. The catalysed reaction is 2 pyruvate + H(+) = (2S)-2-acetolactate + CO2. Its pathway is amino-acid biosynthesis; L-isoleucine biosynthesis; L-isoleucine from 2-oxobutanoate: step 1/4. It participates in amino-acid biosynthesis; L-valine biosynthesis; L-valine from pyruvate: step 1/4. The protein is Acetolactate synthase 3, chloroplastic of Brassica napus (Rape).